Here is a 150-residue protein sequence, read N- to C-terminus: Large ribosomal subunit protein bL9 (150 aa).

Belongs to the bacterial ribosomal protein bL9 family.

Its function is as follows. Binds to the 23S rRNA. The protein is Large ribosomal subunit protein bL9 of Buchnera aphidicola subsp. Acyrthosiphon pisum (strain 5A).